We begin with the raw amino-acid sequence, 316 residues long: Olfactory receptor 2AG1 (316 aa).

Residues 1-25 are Extracellular-facing; the sequence is MELWNFTLGSGFILVGILNDSGSPE. Residues N5 and N19 are each glycosylated (N-linked (GlcNAc...) asparagine). A helical membrane pass occupies residues 26–49; it reads LLCATITILYLLALISNGLLLLAI. Over 50-57 the chain is Cytoplasmic; the sequence is TMEARLHM. Residues 58-79 form a helical membrane-spanning segment; the sequence is PMYLLLGQLSLMDLLFTSVVTP. Topologically, residues 80–100 are extracellular; that stretch reads KALADFLRRENTISFGGCALQ. C97 and C189 form a disulfide bridge. Residues 101 to 120 traverse the membrane as a helical segment; sequence MFLALTMGGAEDLLLAFMAY. The Cytoplasmic segment spans residues 121–139; it reads DRYVAICHPLTYMTLMSSR. Residues 140 to 158 traverse the membrane as a helical segment; the sequence is ACWLMVATSWILASLSALI. Over 159 to 195 the chain is Extracellular; that stretch reads YTVYTMHYPFCRAQEIRHLLCEIPHLLKVACADTSRY. The chain crosses the membrane as a helical span at residues 196 to 219; it reads ELMVYVMGVTFLIPSLAAILASYT. Residues 220–236 are Cytoplasmic-facing; the sequence is QILLTVLHMPSNEGRKK. Residues 237–259 traverse the membrane as a helical segment; it reads ALVTCSSHLTVVGMFYGAATFMY. Residues 260 to 272 lie on the Extracellular side of the membrane; sequence VLPSSFHSTRQDN. A helical transmembrane segment spans residues 273–292; that stretch reads IISVFYTIVTPALNPLIYSL. The Cytoplasmic segment spans residues 293–316; sequence RNKEVMRALRRVLGKYMLPAHSTL.

It belongs to the G-protein coupled receptor 1 family.

It localises to the cell membrane. Odorant receptor. The polypeptide is Olfactory receptor 2AG1 (OR2AG1) (Homo sapiens (Human)).